The sequence spans 445 residues: Ribosomal protein uS12 methylthiotransferase RimO (445 aa).

Positions 4–119 (YKVGMVSLGC…INEAIMNFIN (116 aa)) constitute an MTTase N-terminal domain. Residues Cys13, Cys48, Cys82, Cys157, Cys161, and Cys164 each contribute to the [4Fe-4S] cluster site. One can recognise a Radical SAM core domain in the interval 143–373 (TTDKATAYLR…MLLQKEVSEE (231 aa)). The TRAM domain occupies 376–441 (KNKVGREYDV…EYDLVGVVCN (66 aa)).

It belongs to the methylthiotransferase family. RimO subfamily. Requires [4Fe-4S] cluster as cofactor.

It localises to the cytoplasm. The enzyme catalyses L-aspartate(89)-[ribosomal protein uS12]-hydrogen + (sulfur carrier)-SH + AH2 + 2 S-adenosyl-L-methionine = 3-methylsulfanyl-L-aspartate(89)-[ribosomal protein uS12]-hydrogen + (sulfur carrier)-H + 5'-deoxyadenosine + L-methionine + A + S-adenosyl-L-homocysteine + 2 H(+). Its function is as follows. Catalyzes the methylthiolation of an aspartic acid residue of ribosomal protein uS12. The polypeptide is Ribosomal protein uS12 methylthiotransferase RimO (Clostridium perfringens (strain 13 / Type A)).